The sequence spans 230 residues: 2-C-methyl-D-erythritol 4-phosphate cytidylyltransferase (230 aa).

This sequence belongs to the IspD/TarI cytidylyltransferase family. IspD subfamily.

It catalyses the reaction 2-C-methyl-D-erythritol 4-phosphate + CTP + H(+) = 4-CDP-2-C-methyl-D-erythritol + diphosphate. The protein operates within isoprenoid biosynthesis; isopentenyl diphosphate biosynthesis via DXP pathway; isopentenyl diphosphate from 1-deoxy-D-xylulose 5-phosphate: step 2/6. Its function is as follows. Catalyzes the formation of 4-diphosphocytidyl-2-C-methyl-D-erythritol from CTP and 2-C-methyl-D-erythritol 4-phosphate (MEP). The protein is 2-C-methyl-D-erythritol 4-phosphate cytidylyltransferase of Shewanella halifaxensis (strain HAW-EB4).